The chain runs to 300 residues: Rhodopsin (300 aa).

Over 1–18 (LHMIHLHWYQYPPMNPMM) the chain is Extracellular. A helical transmembrane segment spans residues 19–43 (YPLLLVFMLITGILCLAGNFVTIWV). Residues 44 to 55 (FMNTKSLRTPAN) lie on the Cytoplasmic side of the membrane. The chain crosses the membrane as a helical span at residues 56-78 (LLVVNLAMSDFLMMFTMFPPMMV). The Extracellular segment spans residues 79-92 (TCYYHTWTLGATFC). Cysteine 92 and cysteine 168 are disulfide-bonded. Residues 93 to 115 (QVYAFLGNLCGCASIWTMVFITF) traverse the membrane as a helical segment. The 'Ionic lock' involved in activated form stabilization motif lies at 116–118 (DRY). The Cytoplasmic portion of the chain corresponds to 116–134 (DRYNVIVKGVAGEPLSTKK). A helical membrane pass occupies residues 135-155 (ASLWILTIWILSITWCIAPFF). Topologically, residues 156–181 (GWNRYVPEGNTGCGTDYLSEDILSRS) are extracellular. A helical membrane pass occupies residues 182-203 (YLYIYSTWVYFLPLAITIYCHV). At 204 to 244 (FIIKAVAAHEKGMRDQAKKMGIKSLRNEEAQKTSAECRLAK) the chain is on the cytoplasmic side. The chain crosses the membrane as a helical span at residues 245–266 (IAMTTVALWFIAWTPYLLINWV). Topologically, residues 267 to 277 (GMFARSYLSPV) are extracellular. Residues 278 to 299 (YTIWGYVFAKANAVYNPIVYAI) traverse the membrane as a helical segment. Position 287 is an N6-(retinylidene)lysine (lysine 287).

The protein belongs to the G-protein coupled receptor 1 family. Opsin subfamily. In terms of assembly, homodimer. Interacts with GNAQ. In terms of processing, contains one covalently linked retinal chromophore.

The protein resides in the cell projection. It localises to the rhabdomere membrane. In terms of biological role, photoreceptor required for image-forming vision at low light intensity. Can use both retinal and 3-dehydroretinal as visual pigment. Light-induced isomerization of 11-cis to all-trans retinal triggers a conformational change that activates signaling via G-proteins. Signaling via GNAQ probably mediates the activation of phospholipase C. The protein is Rhodopsin (RHO) of Cambarus maculatus (Freckled crayfish).